We begin with the raw amino-acid sequence, 554 residues long: Dihydroxy-acid dehydratase (554 aa).

Asp-78 is a binding site for Mg(2+). Cys-119 contributes to the [2Fe-2S] cluster binding site. Asp-120 and Lys-121 together coordinate Mg(2+). Residue Lys-121 is modified to N6-carboxylysine. Cys-191 is a [2Fe-2S] cluster binding site. Position 442 (Glu-442) interacts with Mg(2+). Ser-468 acts as the Proton acceptor in catalysis.

Belongs to the IlvD/Edd family. Homodimer. [2Fe-2S] cluster serves as cofactor. The cofactor is Mg(2+).

It catalyses the reaction (2R)-2,3-dihydroxy-3-methylbutanoate = 3-methyl-2-oxobutanoate + H2O. It carries out the reaction (2R,3R)-2,3-dihydroxy-3-methylpentanoate = (S)-3-methyl-2-oxopentanoate + H2O. It participates in amino-acid biosynthesis; L-isoleucine biosynthesis; L-isoleucine from 2-oxobutanoate: step 3/4. The protein operates within amino-acid biosynthesis; L-valine biosynthesis; L-valine from pyruvate: step 3/4. In terms of biological role, functions in the biosynthesis of branched-chain amino acids. Catalyzes the dehydration of (2R,3R)-2,3-dihydroxy-3-methylpentanoate (2,3-dihydroxy-3-methylvalerate) into 2-oxo-3-methylpentanoate (2-oxo-3-methylvalerate) and of (2R)-2,3-dihydroxy-3-methylbutanoate (2,3-dihydroxyisovalerate) into 2-oxo-3-methylbutanoate (2-oxoisovalerate), the penultimate precursor to L-isoleucine and L-valine, respectively. The protein is Dihydroxy-acid dehydratase of Thermotoga petrophila (strain ATCC BAA-488 / DSM 13995 / JCM 10881 / RKU-1).